The sequence spans 62 residues: Metallothionein-4 (62 aa).

Positions 6, 8, 14, 16, 20, 22, 25, 27, 30, 34, 35, 37, 38, 42, 45, 49, 51, 58, 60, and 61 each coordinate a divalent metal cation.

It belongs to the metallothionein superfamily. Type 1 family.

In terms of biological role, seems to bind zinc and copper. Could play a special role in regulating zinc metabolism during the differentiation of stratified epithelia. The sequence is that of Metallothionein-4 (MT4) from Canis lupus familiaris (Dog).